A 478-amino-acid chain; its full sequence is Major facilitator superfamily domain-containing protein 12 (478 aa).

Methionine 1 carries the N-acetylmethionine modification. Residues 1-26 (MVPGSPAAGAGPAPRALSLAARLSYA) are Cytoplasmic-facing. A helical membrane pass occupies residues 27–47 (VGHFLNDLCASMWFTYLLLYL). Topologically, residues 48–56 (HSVRAYSSR) are lumenal. A helical membrane pass occupies residues 57-77 (GAGLLLLLGQVADGLCTPLVG). At 78-97 (YEADRAAGRCARCGPRKAWH) the chain is on the cytoplasmic side. A helical membrane pass occupies residues 98 to 118 (LVGTVCVLLSFPFIFSPCLGC). Residues 119–124 (GAATPE) are Lumenal-facing. The chain crosses the membrane as a helical span at residues 125 to 145 (WAALLYYGPFIVVFQFGWAAT). At 146-168 (QIAHLSLIPELVTSDHEKVELTA) the chain is on the cytoplasmic side. Residues 169–189 (LRYAFTVVANITVFGAAWLLL) form a helical membrane-spanning segment. Residues 190–216 (RLQGSAREGPPDEAGDHLGVQDVPVFR) lie on the Lumenal side of the membrane. The helical transmembrane segment at 217 to 237 (TLSLCVVGVGAVFSLLFHLGT) threads the bilayer. The Cytoplasmic portion of the chain corresponds to 238–277 (RERRRPPAQEPDERSPLLAPATARPLLLWKHWLREPSFYQ). The helical transmembrane segment at 278–300 (VGLLYMSTRLIVNLSQTYIAMYL) threads the bilayer. At 301–308 (TYSLNLPK) the chain is on the lumenal side. A helical transmembrane segment spans residues 309 to 329 (KFIATIPLVMYVSGFCSSFLM). At 330-338 (KPVNKCIGR) the chain is on the cytoplasmic side. Residues 339–359 (NMTYFVGLLVILAFAAWVVLV) traverse the membrane as a helical segment. Residues 360–361 (DE) are Lumenal-facing. The chain crosses the membrane as a helical span at residues 362–382 (LGMAVYVAAVLLGGGCATILV). The Cytoplasmic portion of the chain corresponds to 383–400 (TSLAMTADLIGPHTHSGA). A helical membrane pass occupies residues 401 to 421 (FVYGAMSFSDKVANGLAVMVI). At 422–436 (QSLHPCSLELCCRAC) the chain is on the lumenal side. Residues 437–457 (VGFYHWVMVAVTGGVGVAATL) form a helical membrane-spanning segment. The Cytoplasmic segment spans residues 458–478 (SLCSLLVWPIRLRSWDPGAQP).

Belongs to the major facilitator superfamily.

It is found in the melanosome membrane. The protein resides in the lysosome membrane. The catalysed reaction is L-cysteine(in) = L-cysteine(out). Its function is as follows. Transporter that mediates the import of cysteine into melanosomes, thereby regulating skin/hair pigmentation. In melanosomes, cysteine import is required both for normal levels of cystine, the oxidized dimer of cysteine, and provide cysteine for the production of the cysteinyldopas used in pheomelanin synthesis, thereby regulating skin/hair pigmentation. Also catalyzes import of cysteine into lysosomes in non-pigmented cells, regulating lysosomal cystine and cysteine storage, which is essnetial for redox homeostasis. The chain is Major facilitator superfamily domain-containing protein 12 from Equus caballus (Horse).